The chain runs to 216 residues: ATP-dependent Clp protease proteolytic subunit (216 aa).

The Nucleophile role is filled by Ser120. The active site involves His145.

Belongs to the peptidase S14 family. Fourteen ClpP subunits assemble into 2 heptameric rings which stack back to back to give a disk-like structure with a central cavity, resembling the structure of eukaryotic proteasomes.

The protein localises to the cytoplasm. It catalyses the reaction Hydrolysis of proteins to small peptides in the presence of ATP and magnesium. alpha-casein is the usual test substrate. In the absence of ATP, only oligopeptides shorter than five residues are hydrolyzed (such as succinyl-Leu-Tyr-|-NHMec, and Leu-Tyr-Leu-|-Tyr-Trp, in which cleavage of the -Tyr-|-Leu- and -Tyr-|-Trp bonds also occurs).. Its function is as follows. Cleaves peptides in various proteins in a process that requires ATP hydrolysis. Has a chymotrypsin-like activity. Plays a major role in the degradation of misfolded proteins. This chain is ATP-dependent Clp protease proteolytic subunit, found in Cupriavidus metallidurans (strain ATCC 43123 / DSM 2839 / NBRC 102507 / CH34) (Ralstonia metallidurans).